We begin with the raw amino-acid sequence, 381 residues long: Na(+)/H(+) antiporter NhaA 1 (381 aa).

The next 11 helical transmembrane spans lie at 18-38, 53-73, 89-109, 118-138, 147-167, 170-190, 210-230, 251-271, 283-303, 321-341, and 348-368; these read GLLL…SYSA, ITHW…GLEL, SLPI…FLAL, GAGI…SLLG, VFLT…IAVF, TSIG…LFVL, YFML…AFVI, PVAF…AIES, FGII…FSSI, ILGA…ITLL, and IIVF…ITGF.

It belongs to the NhaA Na(+)/H(+) (TC 2.A.33) antiporter family.

It is found in the cell inner membrane. The catalysed reaction is Na(+)(in) + 2 H(+)(out) = Na(+)(out) + 2 H(+)(in). Functionally, na(+)/H(+) antiporter that extrudes sodium in exchange for external protons. This Flavobacterium johnsoniae (strain ATCC 17061 / DSM 2064 / JCM 8514 / BCRC 14874 / CCUG 350202 / NBRC 14942 / NCIMB 11054 / UW101) (Cytophaga johnsonae) protein is Na(+)/H(+) antiporter NhaA 1.